The primary structure comprises 190 residues: MTESLVLSPAPAKPKRVKASRRSASHPTYSEMIAAAIRAEKSRGGSSRQSIQKYIKSHYKVGHNADLQIKLSIRRLLAAGVLKQTKGVGASGSFRLAKSDKAKRSPGKKKKAVRRSTSPKKAARPRKARSPAKKPKATARKARKKSRASPKKAKKPKTVKAKSRKASKAKKVKRSKPRAKSGARKSPKKK.

Positions 1–29 (MTESLVLSPAPAKPKRVKASRRSASHPTY) are disordered. The span at 13 to 24 (KPKRVKASRRSA) shows a compositional bias: basic residues. Phosphoserine occurs at positions 23, 30, 146, and 167. Residues 25-98 (SHPTYSEMIA…GASGSFRLAK (74 aa)) form the H15 domain. A disordered region spans residues 87–190 (GVGASGSFRL…SGARKSPKKK (104 aa)). Residues 104-190 (RSPGKKKKAV…SGARKSPKKK (87 aa)) show a composition bias toward basic residues.

Belongs to the histone H1/H5 family. Erythroid cells.

Its subcellular location is the nucleus. It localises to the chromosome. Histone H5 performs the same function as H1, being necessary for the condensation of nucleosome chains into higher order structures, and replaces histone H1 in certain cells. This chain is Histone H5, found in Gallus gallus (Chicken).